The primary structure comprises 556 residues: Glutamine--tRNA ligase (556 aa).

The 'HIGH' region signature appears at 34 to 44 (PEPNGYLHIGH). Residues 35–37 (EPN) and 41–47 (HIGHAKS) contribute to the ATP site. L-glutamine is bound by residues Asp-67 and Tyr-212. Residues Thr-231, 263-264 (RL), and 271-273 (MSK) contribute to the ATP site. The 'KMSKS' region signature appears at 270–274 (VMSKR).

It belongs to the class-I aminoacyl-tRNA synthetase family. In terms of assembly, monomer.

The protein resides in the cytoplasm. It catalyses the reaction tRNA(Gln) + L-glutamine + ATP = L-glutaminyl-tRNA(Gln) + AMP + diphosphate. This is Glutamine--tRNA ligase from Nitrosomonas europaea (strain ATCC 19718 / CIP 103999 / KCTC 2705 / NBRC 14298).